Here is a 235-residue protein sequence, read N- to C-terminus: Ribonuclease PH (235 aa).

Residues arginine 86 and 124-126 contribute to the phosphate site; that span reads GTR.

It belongs to the RNase PH family. As to quaternary structure, homohexameric ring arranged as a trimer of dimers.

The catalysed reaction is tRNA(n+1) + phosphate = tRNA(n) + a ribonucleoside 5'-diphosphate. Phosphorolytic 3'-5' exoribonuclease that plays an important role in tRNA 3'-end maturation. Removes nucleotide residues following the 3'-CCA terminus of tRNAs; can also add nucleotides to the ends of RNA molecules by using nucleoside diphosphates as substrates, but this may not be physiologically important. Probably plays a role in initiation of 16S rRNA degradation (leading to ribosome degradation) during starvation. The sequence is that of Ribonuclease PH from Legionella pneumophila (strain Paris).